The following is a 127-amino-acid chain: Large ribosomal subunit protein bL12c (127 aa).

Positions 104–127 (GVAKDAAEEAKKQIEDAGGKASLK) are disordered. The segment covering 105 to 121 (VAKDAAEEAKKQIEDAG) has biased composition (basic and acidic residues).

This sequence belongs to the bacterial ribosomal protein bL12 family. Homodimer. Part of the ribosomal stalk of the 50S ribosomal subunit. Forms a multimeric L10(L12)X complex, where L10 forms an elongated spine to which 2 to 4 L12 dimers bind in a sequential fashion. Binds GTP-bound translation factors.

It localises to the plastid. The protein resides in the chloroplast. In terms of biological role, forms part of the ribosomal stalk which helps the ribosome interact with GTP-bound translation factors. Is thus essential for accurate translation. This is Large ribosomal subunit protein bL12c from Trieres chinensis (Marine centric diatom).